Here is a 285-residue protein sequence, read N- to C-terminus: Aquaporin-6 (285 aa).

3 helical membrane-spanning segments follow: residues 36 to 56, 76 to 96, and 105 to 125; these read IFWK…VFSC, YCFK…ALLL, and ISLV…CYYG. The NPA 1 motif lies at 86–88; sequence NPV. N-linked (GlcNAc...) asparagine glycosylation is present at asparagine 128. 2 consecutive transmembrane segments (helical) span residues 143–163 and 177–197; these read VSPA…ILTM and GDSN…SGMA. The short motif at 206 to 208 is the NPA 2 element; it reads NPM. The helical transmembrane segment at 225–245 threads the bilayer; it reads YIYWIGPIFGCLLAVFTFDYT.

This sequence belongs to the MIP/aquaporin (TC 1.A.8) family.

Its subcellular location is the cell membrane. In terms of biological role, probable water-specific aquaporin that may modulate the water content and osmolytes during anhydrobiosis. The chain is Aquaporin-6 from Milnesium tardigradum (Water bear).